A 341-amino-acid polypeptide reads, in one-letter code: S-adenosylmethionine:tRNA ribosyltransferase-isomerase (341 aa).

This sequence belongs to the QueA family. As to quaternary structure, monomer.

The protein localises to the cytoplasm. It carries out the reaction 7-aminomethyl-7-carbaguanosine(34) in tRNA + S-adenosyl-L-methionine = epoxyqueuosine(34) in tRNA + adenine + L-methionine + 2 H(+). It functions in the pathway tRNA modification; tRNA-queuosine biosynthesis. Functionally, transfers and isomerizes the ribose moiety from AdoMet to the 7-aminomethyl group of 7-deazaguanine (preQ1-tRNA) to give epoxyqueuosine (oQ-tRNA). The protein is S-adenosylmethionine:tRNA ribosyltransferase-isomerase of Symbiobacterium thermophilum (strain DSM 24528 / JCM 14929 / IAM 14863 / T).